A 359-amino-acid polypeptide reads, in one-letter code: Peptide chain release factor 1 (359 aa).

Gln236 is modified (N5-methylglutamine).

It belongs to the prokaryotic/mitochondrial release factor family. In terms of processing, methylated by PrmC. Methylation increases the termination efficiency of RF1.

It localises to the cytoplasm. In terms of biological role, peptide chain release factor 1 directs the termination of translation in response to the peptide chain termination codons UAG and UAA. The sequence is that of Peptide chain release factor 1 from Streptococcus agalactiae serotype V (strain ATCC BAA-611 / 2603 V/R).